A 115-amino-acid polypeptide reads, in one-letter code: Large ribosomal subunit protein uL22 (115 aa).

This sequence belongs to the universal ribosomal protein uL22 family. In terms of assembly, part of the 50S ribosomal subunit.

Its function is as follows. This protein binds specifically to 23S rRNA; its binding is stimulated by other ribosomal proteins, e.g. L4, L17, and L20. It is important during the early stages of 50S assembly. It makes multiple contacts with different domains of the 23S rRNA in the assembled 50S subunit and ribosome. Functionally, the globular domain of the protein is located near the polypeptide exit tunnel on the outside of the subunit, while an extended beta-hairpin is found that lines the wall of the exit tunnel in the center of the 70S ribosome. This is Large ribosomal subunit protein uL22 from Nitrosospira multiformis (strain ATCC 25196 / NCIMB 11849 / C 71).